Consider the following 467-residue polypeptide: 6-phospho-beta-galactosidase (467 aa).

Residues Gln19, His116, Asn159, Glu160, and Asn297 each contribute to the D-galactose 6-phosphate site. Glu160 serves as the catalytic Proton donor. The Nucleophile role is filled by Glu375. 4 residues coordinate D-galactose 6-phosphate: Ser428, Trp429, Lys435, and Tyr437.

Belongs to the glycosyl hydrolase 1 family.

The enzyme catalyses a 6-phospho-beta-D-galactoside + H2O = D-galactose 6-phosphate + an alcohol. It participates in carbohydrate metabolism; lactose degradation; D-galactose 6-phosphate and beta-D-glucose from lactose 6-phosphate: step 1/1. Inhibited by both galactose-6-phosphate and ATP. The sequence is that of 6-phospho-beta-galactosidase from Leptotrichia buccalis (strain ATCC 14201 / DSM 1135 / JCM 12969 / NCTC 10249 / C-1013-b).